Consider the following 172-residue polypeptide: Small t antigen (172 aa).

Methionine 1 is modified (N-acetylmethionine; by host). The region spanning 12–75 (ELMDLLGLER…VKVAHQPDFG (64 aa)) is the J domain. The C4-type; atypical zinc-finger motif lies at 101–114 (CATKPSAHCPCMLC). The segment at 120–141 (HVYRKFLRRDPLVWIDCYCFDC) adopts an H1C3-type; atypical zinc-finger fold.

Interacts with host PPP2R1A; the interaction inhibits PP2A activity.

The protein localises to the host cytoplasm. It localises to the host nucleus. In terms of biological role, promotes efficient viral genome replication by accelerating both G1 and S phase progression of the cell cycle. Inhibits host PP2A by binding to the A subunit, thereby displacing lower affinity regulatory B subunit. Inactivation of PP2A in turn results in the transactivation of cyclin A and cyclin D1 promoters. Late during the infection cycle, ST may induce dephosphorylation of host MTOR, leading to the inhibition of cap-dependent translation. May establish and maintain high levels of viral genomes during persistent infection in cell culture. This is Small t antigen from Simian virus 12 (strain wt100) (SV-12).